The following is a 258-amino-acid chain: Proteasome subunit alpha (258 aa).

It belongs to the peptidase T1A family. As to quaternary structure, the 20S proteasome core is composed of 14 alpha and 14 beta subunits that assemble into four stacked heptameric rings, resulting in a barrel-shaped structure. The two inner rings, each composed of seven catalytic beta subunits, are sandwiched by two outer rings, each composed of seven alpha subunits. The catalytic chamber with the active sites is on the inside of the barrel. Has a gated structure, the ends of the cylinder being occluded by the N-termini of the alpha-subunits. Is capped by the proteasome-associated ATPase, ARC.

It localises to the cytoplasm. It participates in protein degradation; proteasomal Pup-dependent pathway. Its activity is regulated as follows. The formation of the proteasomal ATPase ARC-20S proteasome complex, likely via the docking of the C-termini of ARC into the intersubunit pockets in the alpha-rings, may trigger opening of the gate for substrate entry. Interconversion between the open-gate and close-gate conformations leads to a dynamic regulation of the 20S proteasome proteolysis activity. Component of the proteasome core, a large protease complex with broad specificity involved in protein degradation. The chain is Proteasome subunit alpha from Nocardia farcinica (strain IFM 10152).